The primary structure comprises 232 residues: Ribose-5-phosphate isomerase A (232 aa).

Residues 31–34, 87–90, and 100–103 contribute to the substrate site; these read TGST, DGAD, and KGGG. The active-site Proton acceptor is the Glu109. Lys127 lines the substrate pocket.

The protein belongs to the ribose 5-phosphate isomerase family. In terms of assembly, homodimer.

The catalysed reaction is aldehydo-D-ribose 5-phosphate = D-ribulose 5-phosphate. It functions in the pathway carbohydrate degradation; pentose phosphate pathway; D-ribose 5-phosphate from D-ribulose 5-phosphate (non-oxidative stage): step 1/1. In terms of biological role, catalyzes the reversible conversion of ribose-5-phosphate to ribulose 5-phosphate. In Bifidobacterium longum subsp. infantis (strain ATCC 15697 / DSM 20088 / JCM 1222 / NCTC 11817 / S12), this protein is Ribose-5-phosphate isomerase A.